The sequence spans 376 residues: uncharacterized protein (376 aa).

The N-terminal stretch at 1–22 (MVATGRIIITLLAAALDEIILA) is a signal peptide.

Belongs to the ascovirus HvAV ORF17 family.

This is an uncharacterized protein from Heliothis virescens ascovirus 3e (HvAV-3e).